We begin with the raw amino-acid sequence, 305 residues long: Protoheme IX farnesyltransferase (305 aa).

Helical transmembrane passes span 31 to 51 (VMSL…YSVH), 52 to 72 (PFIA…AGAI), 96 to 118 (VIES…FFMA), 122 to 144 (NLLA…TIWL), 151 to 171 (NIVI…AAVS), 180 to 200 (ILFL…ALFC), 225 to 245 (ILIY…IGMN), 247 to 267 (FIYL…AGSL), and 281 to 301 (FAYS…TNTI).

Belongs to the UbiA prenyltransferase family. Protoheme IX farnesyltransferase subfamily.

The protein localises to the cell inner membrane. It carries out the reaction heme b + (2E,6E)-farnesyl diphosphate + H2O = Fe(II)-heme o + diphosphate. Its pathway is porphyrin-containing compound metabolism; heme O biosynthesis; heme O from protoheme: step 1/1. Converts heme B (protoheme IX) to heme O by substitution of the vinyl group on carbon 2 of heme B porphyrin ring with a hydroxyethyl farnesyl side group. In Rickettsia peacockii (strain Rustic), this protein is Protoheme IX farnesyltransferase.